We begin with the raw amino-acid sequence, 610 residues long: Butyryl-CoA dehydrogenase Swol_1933 (610 aa).

Glu451 (proton acceptor) is an active-site residue.

This sequence belongs to the acyl-CoA dehydrogenase family. It depends on FAD as a cofactor.

It localises to the cytoplasm. It carries out the reaction butanoyl-CoA + oxidized [electron-transfer flavoprotein] + H(+) = (2E)-butenoyl-CoA + reduced [electron-transfer flavoprotein]. It catalyses the reaction a short-chain 2,3-saturated fatty acyl-CoA + oxidized [electron-transfer flavoprotein] + H(+) = a short-chain (2E)-enoyl-CoA + reduced [electron-transfer flavoprotein]. The protein operates within lipid metabolism; butanoate metabolism. Its function is as follows. Involved in syntrophic growth of S.wolfei with butyrate, as part of the butyrate oxidation pathway. Catalyzes the oxidation of butanoyl-CoA to crotonyl-CoA. Probably passes the electrons released by this reaction on to electron-transfer flavoproteins (EtfAB) to finally generate hydrogen and/or formate. This is Butyryl-CoA dehydrogenase Swol_1933 from Syntrophomonas wolfei subsp. wolfei (strain DSM 2245B / Goettingen).